We begin with the raw amino-acid sequence, 323 residues long: Transaldolase (323 aa).

The active-site Schiff-base intermediate with substrate is lysine 133.

The protein belongs to the transaldolase family. Type 1 subfamily. In terms of assembly, monomer.

The catalysed reaction is D-sedoheptulose 7-phosphate + D-glyceraldehyde 3-phosphate = D-erythrose 4-phosphate + beta-D-fructose 6-phosphate. Its pathway is carbohydrate degradation; pentose phosphate pathway; D-glyceraldehyde 3-phosphate and beta-D-fructose 6-phosphate from D-ribose 5-phosphate and D-xylulose 5-phosphate (non-oxidative stage): step 2/3. Its function is as follows. Important for the balance of metabolites in the pentose-phosphate pathway. Involved in xylose fermentation to ethanol. This chain is Transaldolase, found in Gibberella intermedia (Bulb rot disease fungus).